A 199-amino-acid chain; its full sequence is uncharacterized protein (199 aa).

Residues 1–41 (MKFKRDENQNSTHHRGNKNNTNNDDDDKEEEEEIINDTTMP) form a disordered region. Residues 23 to 35 (NDDDDKEEEEEII) are compositionally biased toward acidic residues. A run of 3 helical transmembrane segments spans residues 73–93 (LILD…FAFW), 96–116 (ISTY…VSFL), and 166–186 (IAIA…SPYL).

Its subcellular location is the membrane. This is an uncharacterized protein from Dictyostelium discoideum (Social amoeba).